We begin with the raw amino-acid sequence, 457 residues long: Bifunctional protein GlmU (457 aa).

A pyrophosphorylase region spans residues 1 to 230 (MSKRYAVVLA…FEESLGVNDR (230 aa)). UDP-N-acetyl-alpha-D-glucosamine is bound by residues 9 to 12 (LAAG), Lys-23, Gln-73, and 78 to 79 (GT). Asp-103 lines the Mg(2+) pocket. Residues Gly-140, Glu-155, Asn-170, and Asn-228 each coordinate UDP-N-acetyl-alpha-D-glucosamine. Asn-228 is a Mg(2+) binding site. A linker region spans residues 231–251 (IALAEASKLMQRRINENHMRN). An N-acetyltransferase region spans residues 252–457 (GVTLVNPEST…GYAKHLNHSK (206 aa)). UDP-N-acetyl-alpha-D-glucosamine-binding residues include Arg-333 and Lys-351. The active-site Proton acceptor is His-363. Tyr-366 and Asn-377 together coordinate UDP-N-acetyl-alpha-D-glucosamine. Acetyl-CoA-binding positions include 386–387 (NY), Ala-423, and Arg-440.

The protein in the N-terminal section; belongs to the N-acetylglucosamine-1-phosphate uridyltransferase family. This sequence in the C-terminal section; belongs to the transferase hexapeptide repeat family. In terms of assembly, homotrimer. It depends on Mg(2+) as a cofactor.

The protein resides in the cytoplasm. The enzyme catalyses alpha-D-glucosamine 1-phosphate + acetyl-CoA = N-acetyl-alpha-D-glucosamine 1-phosphate + CoA + H(+). It carries out the reaction N-acetyl-alpha-D-glucosamine 1-phosphate + UTP + H(+) = UDP-N-acetyl-alpha-D-glucosamine + diphosphate. It participates in nucleotide-sugar biosynthesis; UDP-N-acetyl-alpha-D-glucosamine biosynthesis; N-acetyl-alpha-D-glucosamine 1-phosphate from alpha-D-glucosamine 6-phosphate (route II): step 2/2. Its pathway is nucleotide-sugar biosynthesis; UDP-N-acetyl-alpha-D-glucosamine biosynthesis; UDP-N-acetyl-alpha-D-glucosamine from N-acetyl-alpha-D-glucosamine 1-phosphate: step 1/1. The protein operates within bacterial outer membrane biogenesis; LPS lipid A biosynthesis. In terms of biological role, catalyzes the last two sequential reactions in the de novo biosynthetic pathway for UDP-N-acetylglucosamine (UDP-GlcNAc). The C-terminal domain catalyzes the transfer of acetyl group from acetyl coenzyme A to glucosamine-1-phosphate (GlcN-1-P) to produce N-acetylglucosamine-1-phosphate (GlcNAc-1-P), which is converted into UDP-GlcNAc by the transfer of uridine 5-monophosphate (from uridine 5-triphosphate), a reaction catalyzed by the N-terminal domain. The sequence is that of Bifunctional protein GlmU from Listeria monocytogenes serovar 1/2a (strain ATCC BAA-679 / EGD-e).